Reading from the N-terminus, the 110-residue chain is UPF0102 protein Abu_0255 (110 aa).

This sequence belongs to the UPF0102 family.

The chain is UPF0102 protein Abu_0255 from Aliarcobacter butzleri (strain RM4018) (Arcobacter butzleri).